Consider the following 447-residue polypeptide: NADH peroxidase (447 aa).

FAD is bound by residues 7 to 11 (GSSHG), glutamate 32, cysteine 42, 110 to 113 (SPGA), and arginine 132. Histidine 10 serves as the catalytic Proton acceptor. Cysteine 42 serves as the catalytic Redox-active. Cysteine 42 carries the cysteine sulfenic acid (-SOH) modification. NAD(+) is bound by residues isoleucine 160, aspartate 179, tyrosine 188, and glycine 243. Aspartate 281 provides a ligand contact to FAD. Alanine 297 is an NAD(+) binding site. Position 299 (alanine 299) interacts with FAD. Glycine 328 is an NAD(+) binding site.

The protein belongs to the class-III pyridine nucleotide-disulfide oxidoreductase family. In terms of assembly, homotetramer. FAD serves as cofactor.

It catalyses the reaction H2O2 + NADH + H(+) = NAD(+) + 2 H2O. Its function is as follows. Peroxidase whose active site is a redox-active cysteine-sulfenic acid. This Enterococcus faecalis (strain ATCC 700802 / V583) protein is NADH peroxidase (npr).